A 506-amino-acid chain; its full sequence is 2-isopropylmalate synthase (506 aa).

Positions 4-266 constitute a Pyruvate carboxyltransferase domain; it reads ILFMDTTLRD…EPSMTLKEIK (263 aa). Mn(2+)-binding residues include Asp-13, His-201, His-203, and Asn-237. The segment at 390–506 is regulatory domain; that stretch reads NITQLQVHFV…KLKSFIQLVK (117 aa).

This sequence belongs to the alpha-IPM synthase/homocitrate synthase family. LeuA type 1 subfamily. In terms of assembly, homodimer. Mn(2+) is required as a cofactor.

It localises to the cytoplasm. It carries out the reaction 3-methyl-2-oxobutanoate + acetyl-CoA + H2O = (2S)-2-isopropylmalate + CoA + H(+). It participates in amino-acid biosynthesis; L-leucine biosynthesis; L-leucine from 3-methyl-2-oxobutanoate: step 1/4. Functionally, catalyzes the condensation of the acetyl group of acetyl-CoA with 3-methyl-2-oxobutanoate (2-ketoisovalerate) to form 3-carboxy-3-hydroxy-4-methylpentanoate (2-isopropylmalate). This Bacillus cereus (strain AH820) protein is 2-isopropylmalate synthase.